A 122-amino-acid chain; its full sequence is Large ribosomal subunit protein uL14 (122 aa).

This sequence belongs to the universal ribosomal protein uL14 family. Part of the 50S ribosomal subunit. Forms a cluster with proteins L3 and L19. In the 70S ribosome, L14 and L19 interact and together make contacts with the 16S rRNA in bridges B5 and B8.

In terms of biological role, binds to 23S rRNA. Forms part of two intersubunit bridges in the 70S ribosome. The polypeptide is Large ribosomal subunit protein uL14 (Borreliella burgdorferi (strain ZS7) (Borrelia burgdorferi)).